The following is a 963-amino-acid chain: Protein NLP2 (963 aa).

The region spanning 635-716 (RRPGEKRRTK…IDSVQGVQGS (82 aa)) is the RWP-RK domain. The segment covering 734 to 755 (MSGTGTSFKNPNAQTENGVSAQ) has biased composition (polar residues). A disordered region spans residues 734-794 (MSGTGTSFKN…QSTNTGTTSN (61 aa)). Positions 756–794 (GTAAAPKSPPSSSCSHSSGSSTCCSTGANQSTNTGTTSN) are enriched in low complexity. The region spanning 862 to 945 (ASKVKATFGE…RTIKISVHEA (84 aa)) is the PB1 domain.

The protein localises to the nucleus. Its function is as follows. Probable transcription factor. The protein is Protein NLP2 (NLP2) of Arabidopsis thaliana (Mouse-ear cress).